Reading from the N-terminus, the 182-residue chain is Core-binding factor subunit beta (182 aa).

A173 carries the phosphoserine modification.

Belongs to the CBF-beta family. Heterodimer with RUNX1, RUNX2 and RUNX3. Interacts with COPRS. Found in a complex with PRMT5 and RUNX1. As to quaternary structure, (Microbial infection) Interacts with HIV-1 Vif; forming an active cullin-5-RING E3 ubiquitin-protein ligase complex (ECS complex).

The protein localises to the nucleus. Forms the heterodimeric complex core-binding factor (CBF) with RUNX family proteins (RUNX1, RUNX2, and RUNX3). RUNX members modulate the transcription of their target genes through recognizing the core consensus binding sequence 5'-TGTGGT-3', or very rarely, 5'-TGCGGT-3', within their regulatory regions via their runt domain, while CBFB is a non-DNA-binding regulatory subunit that allosterically enhances the sequence-specific DNA-binding capacity of RUNX. The heterodimers bind to the core site of a number of enhancers and promoters, including murine leukemia virus, polyomavirus enhancer, T-cell receptor enhancers, LCK, IL3 and GM-CSF promoters. CBF complexes repress ZBTB7B transcription factor during cytotoxic (CD8+) T cell development. They bind to RUNX-binding sequence within the ZBTB7B locus acting as transcriptional silencer and allowing for cytotoxic T cell differentiation. Its function is as follows. (Microbial infection) Following infection, hijacked by the HIV-1 Vif protein, leading to the formation a cullin-5-RING E3 ubiquitin-protein ligase complex (ECS complex) that catalyzes ubiquitination and degradation of APOBEC3F and APOBEC3G. The complex can also ubiquitinate APOBEC3H to some extent. Association with HIV-1 Vif protein also inhibits the transcription coactivator activity of CBFB/CBF-beta. The protein is Core-binding factor subunit beta (CBFB) of Homo sapiens (Human).